Here is a 205-residue protein sequence, read N- to C-terminus: Thymidylate kinase (205 aa).

13-20 (GIDGSGKS) is a binding site for ATP.

This sequence belongs to the thymidylate kinase family.

The enzyme catalyses dTMP + ATP = dTDP + ADP. Functionally, phosphorylation of dTMP to form dTDP in both de novo and salvage pathways of dTTP synthesis. This is Thymidylate kinase from Leptospira borgpetersenii serovar Hardjo-bovis (strain L550).